We begin with the raw amino-acid sequence, 595 residues long: Indole-3-acetic acid-amido synthetase GH3.15 (595 aa).

Residues 97–98, threonine 302, and 325–330 contribute to the ATP site; these read SS and FYGSSE. Residues phenylalanine 325 and phenylalanine 332 each coordinate substrate. ATP contacts are provided by tyrosine 348 and aspartate 408.

This sequence belongs to the IAA-amido conjugating enzyme family. Expressed in seedlings, roots, and parts of the siliques.

It catalyses the reaction (indol-3-yl)butanoate + L-cysteine + ATP = (indol-3-yl)butanoyl-L-cysteine + AMP + diphosphate + H(+). The catalysed reaction is (indol-3-yl)butanoate + L-glutamine + ATP = (indol-3-yl)butanoyl-L-glutamine + AMP + diphosphate + H(+). The enzyme catalyses 4-(2,4-dichlorophenoxy)butanoate + L-glutamine + ATP = 4-(2,4-dichlorophenoxy)butanoyl-L-glutamine + AMP + diphosphate + H(+). Indole-3-acetic acid-amido (IAA) synthetase that catalyzes the conjugation of amino acids to auxin specifically using the auxin precursor indole-3-butyric acid (IBA) and glutamine and, possibly, cysteine as substrates. Displays high catalytic activity with the auxinic phenoxyalkanoic acid herbicides 4-(2,4-dichlorophenoxy)butyric acid (2,4-DB) and to some extent 2,4-dichlorophenoxylacetic acid (2,4-D) as substrates, thus conferring resistance to herbicides. In Arabidopsis thaliana (Mouse-ear cress), this protein is Indole-3-acetic acid-amido synthetase GH3.15.